Reading from the N-terminus, the 375-residue chain is Growth/differentiation factor 8 (375 aa).

A signal peptide spans 1–18; that stretch reads MQKLQIFVYIYLFVLIVA. A propeptide spanning residues 19 to 266 is cleaved from the precursor; the sequence is GPVDLNENSE…VTDTPKRSRR (248 aa). 2 N-linked (GlcNAc...) asparagine glycosylation sites follow: Asn48 and Asn71. Cystine bridges form between Cys272-Cys282, Cys281-Cys340, Cys309-Cys372, and Cys313-Cys374.

Belongs to the TGF-beta family. As to quaternary structure, homodimer; disulfide-linked. Interacts with WFIKKN2, leading to inhibit its activity. Interacts with FSTL3. Post-translationally, synthesized as large precursor molecule that undergoes proteolytic cleavage to generate an N-terminal propeptide and a disulfide linked C-terminal dimer, which is the biologically active molecule. The circulating form consists of a latent complex of the C-terminal dimer and other proteins, including its propeptide, which maintain the C-terminal dimer in a latent, inactive state. Ligand activation requires additional cleavage of the prodomain by a tolloid-like metalloproteinase.

Its subcellular location is the secreted. In terms of biological role, acts specifically as a negative regulator of skeletal muscle growth. The protein is Growth/differentiation factor 8 (MSTN) of Aepyceros melampus (Impala).